Reading from the N-terminus, the 248-residue chain is DnaA regulatory inactivator Hda (248 aa).

The protein belongs to the DnaA family. HdA subfamily. In terms of assembly, the active form seems to be an ADP-bound monomer. Forms the RIDA complex (regulatory inactivation of DnaA) of ATP-DnaA, ADP-Hda and the DNA-loaded beta sliding clamp (dnaN).

Mediates the interaction of DNA replication initiator protein DnaA with DNA polymerase subunit beta sliding clamp (dnaN). Stimulates hydrolysis of ATP-DnaA to ADP-DnaA, rendering DnaA inactive for reinitiation, a process called regulatory inhibition of DnaA or RIDA. The chain is DnaA regulatory inactivator Hda from Proteus mirabilis (strain HI4320).